Consider the following 293-residue polypeptide: Ribosomal protein L11 methyltransferase (293 aa).

S-adenosyl-L-methionine contacts are provided by T145, G166, D188, and N230.

This sequence belongs to the methyltransferase superfamily. PrmA family.

The protein resides in the cytoplasm. The catalysed reaction is L-lysyl-[protein] + 3 S-adenosyl-L-methionine = N(6),N(6),N(6)-trimethyl-L-lysyl-[protein] + 3 S-adenosyl-L-homocysteine + 3 H(+). Its function is as follows. Methylates ribosomal protein L11. The sequence is that of Ribosomal protein L11 methyltransferase from Escherichia coli O139:H28 (strain E24377A / ETEC).